Reading from the N-terminus, the 205-residue chain is Endothelial cell-specific chemotaxis regulator (205 aa).

The signal sequence occupies residues 1–24 (MGTAGAMQLCWVILGFLLFRGHNS). Over 25 to 124 (QPTMTQTSSS…TSETVLTVAA (100 aa)) the chain is Extracellular. Composition is skewed to polar residues over residues 49–71 (SSNPGYIPSSEANRPSHLSSTGT) and 86–101 (SRDTFQTVPPNSTTMS). Positions 49-101 (SSNPGYIPSSEANRPSHLSSTGTPGAGVPSSGRDGGTSRDTFQTVPPNSTTMS) are disordered. The helical transmembrane segment at 125–145 (FGVISFIVILVVVVIILVGVV) threads the bilayer. Topologically, residues 146–205 (SLRFKCRKSKESEDPQKPGSSGLSESCSTANGEKDSITLISMKNINMNNGKQSLSAEKVL) are cytoplasmic. The segment at 153–175 (KSKESEDPQKPGSSGLSESCSTA) is disordered. Residues 163 to 175 (PGSSGLSESCSTA) show a composition bias toward polar residues. At S198 the chain carries Phosphoserine.

It belongs to the ECSCR family. In terms of assembly, interacts with FLNA. Interacts with the 20S proteasome subunit PSMA7. In terms of processing, may be heavily O-glycosylated. Highest expression in endothelial cells. Also detected in vascular smooth muscle, macrophages, lymphocytes, and mast cells.

The protein resides in the cell membrane. It is found in the cytoplasm. Functionally, regulates endothelial chemotaxis and tube formation. Has a role in angiogenesis and apoptosis via modulation of the actin cytoskeleton and facilitation of proteasomal degradation of the apoptosis inhibitors BIRC3/IAP1 and BIRC2/IAP2. This Homo sapiens (Human) protein is Endothelial cell-specific chemotaxis regulator (ECSCR).